A 283-amino-acid polypeptide reads, in one-letter code: Bifunctional protein FolD (283 aa).

NADP(+) is bound by residues 164-166 (GRS) and Ser189.

This sequence belongs to the tetrahydrofolate dehydrogenase/cyclohydrolase family. Homodimer.

It carries out the reaction (6R)-5,10-methylene-5,6,7,8-tetrahydrofolate + NADP(+) = (6R)-5,10-methenyltetrahydrofolate + NADPH. The catalysed reaction is (6R)-5,10-methenyltetrahydrofolate + H2O = (6R)-10-formyltetrahydrofolate + H(+). Its pathway is one-carbon metabolism; tetrahydrofolate interconversion. In terms of biological role, catalyzes the oxidation of 5,10-methylenetetrahydrofolate to 5,10-methenyltetrahydrofolate and then the hydrolysis of 5,10-methenyltetrahydrofolate to 10-formyltetrahydrofolate. In Lactobacillus acidophilus (strain ATCC 700396 / NCK56 / N2 / NCFM), this protein is Bifunctional protein FolD.